A 228-amino-acid polypeptide reads, in one-letter code: L-ribulose-5-phosphate 4-epimerase UlaF (228 aa).

Substrate is bound by residues 26 to 27, 43 to 44, and 72 to 73; these read GN, SG, and SS. 3 residues coordinate Zn(2+): aspartate 74, histidine 93, and histidine 95. Aspartate 118 (proton donor/acceptor) is an active-site residue. Zn(2+) is bound at residue histidine 167. Tyrosine 225 serves as the catalytic Proton donor/acceptor.

The protein belongs to the aldolase class II family. AraD/FucA subfamily. It depends on Zn(2+) as a cofactor.

The enzyme catalyses L-ribulose 5-phosphate = D-xylulose 5-phosphate. Its pathway is cofactor degradation; L-ascorbate degradation; D-xylulose 5-phosphate from L-ascorbate: step 4/4. Functionally, catalyzes the isomerization of L-ribulose 5-phosphate to D-xylulose 5-phosphate. Is involved in the anaerobic L-ascorbate utilization. In Salmonella choleraesuis (strain SC-B67), this protein is L-ribulose-5-phosphate 4-epimerase UlaF.